The following is a 600-amino-acid chain: Pyranose dehydrogenase 3 (600 aa).

Residues 1 to 25 (MLPRVARLNTHLVSLALLGFQITYG) form the signal peptide. N-linked (GlcNAc...) asparagine glycosylation is found at Asn99 and Asn114. A Tele-8alpha-FAD histidine modification is found at His127. 6 N-linked (GlcNAc...) asparagine glycosylation sites follow: Asn173, Asn199, Asn275, Asn342, Asn399, and Asn507. His535 serves as the catalytic Proton acceptor. The N-linked (GlcNAc...) asparagine glycan is linked to Asn546. The active site involves His579.

It belongs to the GMC oxidoreductase family. As to quaternary structure, monomer. Requires FAD as cofactor. N-glycosylated.

It localises to the secreted. It catalyses the reaction pyranose + acceptor = pyranos-2-ulose + reduced acceptor.. The enzyme catalyses pyranose + acceptor = pyranos-3-ulose + reduced acceptor.. The catalysed reaction is pyranose + acceptor = pyranos-2,3-diulose + reduced acceptor.. It carries out the reaction a pyranoside + acceptor = a pyranosid-3-ulose + reduced acceptor.. It catalyses the reaction a pyranoside + acceptor = a pyranosid-3,4-diulose + reduced acceptor.. Its function is as follows. Catalyzes the single-oxidation or sequential double oxidation reaction of carbohydrates primarily at carbon-2 and/or carbon-3 with the concomitant reduction of the flavin. The enzyme exhibits a broad sugar substrate specificity, oxidizing different aldopyranoses to the corresponding C-1, C-2, C-3 or C-1,2, C-2,3 and C-3,4 (di)dehydro sugars with substrate-specific regioselectivity. Accepts only a narrow range of electron acceptors such as substituted benzoquinones and complexed metal ions and reacts extremely slowly with O(2) as acceptor. May play a role in the natural recycling of plant matter by oxidizing all major monosaccharides in lignocellulose and by reducing quinone compounds or reactive radical species generated during lignin depolymerization. In Leucoagaricus meleagris (Western flat-topped agaric), this protein is Pyranose dehydrogenase 3.